The following is a 227-amino-acid chain: uncharacterized protein (227 aa).

The protein localises to the virion. This is an uncharacterized protein from Acanthamoeba polyphaga (Amoeba).